The sequence spans 283 residues: Bifunctional protein FolD (283 aa).

Residues 164 to 166 (GRS), S189, and I230 contribute to the NADP(+) site.

It belongs to the tetrahydrofolate dehydrogenase/cyclohydrolase family. In terms of assembly, homodimer.

The enzyme catalyses (6R)-5,10-methylene-5,6,7,8-tetrahydrofolate + NADP(+) = (6R)-5,10-methenyltetrahydrofolate + NADPH. It carries out the reaction (6R)-5,10-methenyltetrahydrofolate + H2O = (6R)-10-formyltetrahydrofolate + H(+). Its pathway is one-carbon metabolism; tetrahydrofolate interconversion. Functionally, catalyzes the oxidation of 5,10-methylenetetrahydrofolate to 5,10-methenyltetrahydrofolate and then the hydrolysis of 5,10-methenyltetrahydrofolate to 10-formyltetrahydrofolate. This chain is Bifunctional protein FolD, found in Lactobacillus delbrueckii subsp. bulgaricus (strain ATCC 11842 / DSM 20081 / BCRC 10696 / JCM 1002 / NBRC 13953 / NCIMB 11778 / NCTC 12712 / WDCM 00102 / Lb 14).